The sequence spans 161 residues: Large ribosomal subunit protein uL11 (161 aa).

It belongs to the universal ribosomal protein uL11 family. In terms of assembly, part of the ribosomal stalk of the 50S ribosomal subunit. Interacts with L10 and the large rRNA to form the base of the stalk. L10 forms an elongated spine to which L12 dimers bind in a sequential fashion forming a multimeric L10(L12)X complex.

Functionally, forms part of the ribosomal stalk which helps the ribosome interact with GTP-bound translation factors. This chain is Large ribosomal subunit protein uL11, found in Methanocaldococcus jannaschii (strain ATCC 43067 / DSM 2661 / JAL-1 / JCM 10045 / NBRC 100440) (Methanococcus jannaschii).